A 127-amino-acid chain; its full sequence is Large ribosomal subunit protein bL21 (127 aa).

This sequence belongs to the bacterial ribosomal protein bL21 family. Part of the 50S ribosomal subunit. Contacts protein L20.

Its function is as follows. This protein binds to 23S rRNA in the presence of protein L20. This Synechococcus elongatus (strain ATCC 33912 / PCC 7942 / FACHB-805) (Anacystis nidulans R2) protein is Large ribosomal subunit protein bL21.